The following is a 2442-amino-acid chain: Centrosome-associated protein CEP250 (2442 aa).

Coiled coils occupy residues 95 to 158, 244 to 352, 395 to 1172, and 1243 to 2227; these read NLDE…KESQ, AQLL…TQVM, LTRR…EQQP, and SALH…KERL. Basic and acidic residues-rich tracts occupy residues 1273-1289 and 1699-1715; these read LTDT…ELQD and LTTQ…EGKG. Disordered stretches follow at residues 1273–1308, 1699–1725, and 1820–1839; these read LTDT…EGKQ, LTTQ…GSLE, and EALQ…VKEK. Residues 1820–1831 show a composition bias toward low complexity; sequence EALQQEQQQAQG. Ser2138 bears the Phosphoserine mark. Residue Thr2218 is modified to Phosphothreonine. Positions 2223–2244 are disordered; the sequence is EKERLHSPGATSTAELGSRGEQ. A phosphoserine mark is found at Ser2229, Ser2252, and Ser2322. Residues 2262–2376 adopt a coiled-coil conformation; that stretch reads GMEKQSWRQR…RKQKQDYITR (115 aa). 2 disordered regions span residues 2307–2345 and 2416–2442; these read RRKL…KNSD and ESLT…AASR. Positions 2328–2338 are enriched in polar residues; that stretch reads ATASSPTQQDG. Phosphoserine; by NEK2 occurs at positions 2417 and 2421. The span at 2433-2442 shows a compositional bias: polar residues; it reads SPSTTQAASR.

Monomer and homodimer. Forms a complex in vitro with both NEK2 kinase and the PPP1CC catalytic subunit of protein phosphatase 1 (PP1). Interacts with CEP135. Interacts with CROCC/rootletin. Interacts with CNTLN. Interacts with NIN (via C-terminus). Interacts with CCDC102B (via N-terminus); the interaction results in recruitment of CCDC102B to the proximal ends of centrioles. In terms of processing, differentially phosphorylated during cell cycle. Phosphorylation may regulate association/dissociation from centrosome. During M phase of mitosis, C-terminal part is phosphorylated by NEK2, suggesting that it may trigger the dissociation from the mitotic centrosome. Dephosphorylated in vitro by the PP1 phosphatase. As to expression, ubiquitously and weakly expressed.

The protein localises to the cytoplasm. The protein resides in the perinuclear region. It is found in the cytoskeleton. It localises to the microtubule organizing center. Its subcellular location is the centrosome. The protein localises to the centriole. The protein resides in the cilium basal body. It is found in the cell projection. It localises to the cilium. Its subcellular location is the photoreceptor outer segment. The protein localises to the photoreceptor inner segment. Its function is as follows. Plays an important role in centrosome cohesion during interphase. Recruits CCDC102B to the proximal ends of centrioles. Maintains centrosome cohesion by forming intercentriolar linkages. Accumulates at the proximal end of each centriole, forming supramolecular assemblies with viscous material properties that promote organelle cohesion. May be involved in ciliogenesis. This chain is Centrosome-associated protein CEP250 (CEP250), found in Homo sapiens (Human).